Consider the following 930-residue polypeptide: Kinesin-like protein KIN-7J (930 aa).

Residues 9–273 (KILVSVRVRP…TLGTVIRKLR (265 aa)) enclose the Kinesin motor domain. 95 to 102 (GQTSSGKT) serves as a coordination point for ATP. 2 disordered regions span residues 449–569 (LKNS…IGTD) and 655–686 (MQTK…SLKD). Residues 459–468 (SVEAQESQES) are compositionally biased toward low complexity. 2 stretches are compositionally biased toward basic and acidic residues: residues 473–482 (EQMKNEERKM) and 533–558 (AKLD…KDCN). Residues 666 to 681 (TSSISFDSGSSTSIDT) are compositionally biased toward low complexity. A Glycyl lysine isopeptide (Lys-Gly) (interchain with G-Cter in ubiquitin) cross-link involves residue lysine 805.

This sequence belongs to the TRAFAC class myosin-kinesin ATPase superfamily. Kinesin family. KIN-7 subfamily.

The chain is Kinesin-like protein KIN-7J from Arabidopsis thaliana (Mouse-ear cress).